A 419-amino-acid polypeptide reads, in one-letter code: Phosphatidylcholine:ceramide cholinephosphotransferase 1 (419 aa).

Positions 13 to 76 (WSPKKVADWL…LDMIETLKME (64 aa)) constitute an SAM domain. Ser-14 is modified (phosphoserine). 5 helical membrane passes run 142-162 (LLAFLYALSCFVLTTVMISVV), 190-210 (FSICEINGMILVGLWLFQWLL), 221-241 (FFCIVGTLYLYRCITMYVTTL), 282-302 (MCGDYLYSGHTVMLTLTYLFI), and 310-330 (LWWYHWICWLLSVVGIFCILL). His-291 is a catalytic residue. Residues 331 to 419 (AHDHYTVDVV…VKYSRLVNDT (89 aa)) lie on the Cytoplasmic side of the membrane. Catalysis depends on residues His-334 and Asp-338.

Belongs to the sphingomyelin synthase family.

It localises to the golgi apparatus membrane. The enzyme catalyses an N-acylsphing-4-enine + a 1,2-diacyl-sn-glycero-3-phosphocholine = a sphingomyelin + a 1,2-diacyl-sn-glycerol. It carries out the reaction 1-(9Z-octadecenoyl)-2-acyl-sn-3-glycerol + a sphingomyelin = a 1-(9Z-octadecenoyl)-2-acyl-sn-glycero-3-phosphocholine + an N-acylsphing-4-enine. The catalysed reaction is N-hexadecanoylsphinganine + a 1,2-diacyl-sn-glycero-3-phosphocholine = N-hexadecanoyl-sphinganine-1-phosphocholine + a 1,2-diacyl-sn-glycerol. It catalyses the reaction N-hexadecanoyl-(4R)-hydroxysphinganine + a 1,2-diacyl-sn-glycero-3-phosphocholine = N-hexadecanoyl-(4R)-hydroxysphinganine-phosphocholine + a 1,2-diacyl-sn-glycerol. The enzyme catalyses an N-acylsphing-4-enine + a 1,2-diacyl-sn-glycero-3-phosphoethanolamine = an N-acylsphing-4-enine 1-phosphoethanolamine + a 1,2-diacyl-sn-glycerol. Its pathway is sphingolipid metabolism. Major sphingomyelin synthase at the Golgi apparatus. Catalyzes the reversible transfer of phosphocholine moiety in sphingomyelin biosynthesis: in the forward reaction transfers phosphocholine head group of phosphatidylcholine (PC) on to ceramide (CER) to form ceramide phosphocholine (sphingomyelin, SM) and diacylglycerol (DAG) as by-product, and in the reverse reaction transfers phosphocholine from SM to DAG to form PC and CER. The direction of the reaction depends on the levels of CER and DAG in Golgi membranes. Converts the newly synthesized CER, that is transported from the endoplasmic reticulum to the trans-Golgi by the Cer transport protein (CERT), to SM. Can form a heteromeric complex with glucosylceramide synthase (GCS) increasing SMS activity and reducing glucosylceramide synthesis, a critical mechanism that controls the metabolic fate of CER in the Golgi. Does not use free phosphorylcholine or CDP-choline as donor. Can also transfer phosphoethanolamine head group of phosphatidylethanolamine (PE) on to CER to form ceramide phosphoethanolamine (CPE). Regulates receptor-mediated signal transduction via mitogenic DAG and proapoptotic CER, as well as via SM, a structural component of membrane rafts that serve as platforms for signal transduction and protein sorting. Plays a role in secretory transport via regulation of DAG pool at the Golgi apparatus and its downstream effects on PRKD1. The polypeptide is Phosphatidylcholine:ceramide cholinephosphotransferase 1 (Sgms1) (Rattus norvegicus (Rat)).